A 285-amino-acid polypeptide reads, in one-letter code: Glutamate racemase (285 aa).

Substrate-binding positions include 28 to 29 and 60 to 61; these read DS and YG. Cys-92 acts as the Proton donor/acceptor in catalysis. Residue 93 to 94 coordinates substrate; that stretch reads NT. The active-site Proton donor/acceptor is the Cys-204. Residue 205–206 coordinates substrate; the sequence is TH.

This sequence belongs to the aspartate/glutamate racemases family.

The catalysed reaction is L-glutamate = D-glutamate. It functions in the pathway cell wall biogenesis; peptidoglycan biosynthesis. Functionally, provides the (R)-glutamate required for cell wall biosynthesis. The sequence is that of Glutamate racemase from Escherichia coli O7:K1 (strain IAI39 / ExPEC).